Here is a 118-residue protein sequence, read N- to C-terminus: Basic phospholipase A2 3 (118 aa).

Cystine bridges form between C11/C71, C27/C117, C29/C45, C44/C98, C51/C91, C60/C84, and C78/C89. 3 residues coordinate Ca(2+): Y28, G30, and G32. H48 is a catalytic residue. D49 contacts Ca(2+). The active site involves D92.

This sequence belongs to the phospholipase A2 family. Group I subfamily. D49 sub-subfamily. In terms of assembly, monomer. Ca(2+) is required as a cofactor. In terms of tissue distribution, expressed by the venom gland.

The protein localises to the secreted. It catalyses the reaction a 1,2-diacyl-sn-glycero-3-phosphocholine + H2O = a 1-acyl-sn-glycero-3-phosphocholine + a fatty acid + H(+). In terms of biological role, PLA2 catalyzes the calcium-dependent hydrolysis of the 2-acyl groups in 3-sn-phosphoglycerides. In Laticauda semifasciata (Black-banded sea krait), this protein is Basic phospholipase A2 3.